Consider the following 516-residue polypeptide: MIPLQVDPNVVAQGVNYVWILVVSFLIFFMQPGFALLEAGQVRAKNVGNVLMKNMTDWALGVLVYFVVGAGVATIVGGLTSPGGFDVAAAFSYIGDSGAWIDWLFGAVFAMTAATIVSGAVAERMDFRAYVVFAATITGFIYPVVQGLTWSGGLLSGSGYLGAALGVGYLDFAGATVVHMCGGVAGLVGAKMVGPRKGRFGASGESQPIPGHSMLLAVLGTLILAFGWYGFNVGTQATVLATTESGGLEFMGAALGRVALVTTLGMGAGAVAAMVVSTNYQGKPDPLWMANGLLAGLVAVTGAVPHVTWWGGLVLGALGGAIVLPAYRWTVDSLKIDDVCGVFAVHGVAGAVGTALIPVFAVGGFSATQLVMQVAGVGIIALWTIVASAVVFAAAGTVFGLRVSEEEELEGLDIGEHGVSVYPEFIGESGPDRGVGTRAATDGGNDVRTDGGNDVRTDGGNDVRTDGGNDVRTDGGNDVRTDGGNDVRTDGDVVGDNGVAVTEGNDSAAVDGGENQ.

A run of 11 helical transmembrane segments spans residues 17 to 37, 59 to 79, 101 to 121, 130 to 150, 170 to 190, 214 to 234, 258 to 278, 286 to 306, 307 to 327, 342 to 362, and 374 to 394; these read YVWILVVSFLIFFMQPGFALL, ALGVLVYFVVGAGVATIVGGL, IDWLFGAVFAMTAATIVSGAV, YVVFAATITGFIYPVVQGLTW, LDFAGATVVHMCGGVAGLVGA, MLLAVLGTLILAFGWYGFNVG, VALVTTLGMGAGAVAAMVVST, PLWMANGLLAGLVAVTGAVPH, VTWWGGLVLGALGGAIVLPAY, VFAVHGVAGAVGTALIPVFAV, and VAGVGIIALWTIVASAVVFAA. The disordered stretch occupies residues 426-516; that stretch reads IGESGPDRGV…SAAVDGGENQ (91 aa). Positions 445 to 491 are enriched in basic and acidic residues; sequence NDVRTDGGNDVRTDGGNDVRTDGGNDVRTDGGNDVRTDGGNDVRTDG.

This sequence belongs to the ammonia transporter channel (TC 1.A.11.2) family. Homotrimer. Interacts with both GlnK1 and GlnK2 after ammonium shock. Interaction is rapid, reversible and dependent on nitrogen source.

It is found in the cell membrane. Functionally, involved in the uptake of ammonium/ammonia (NH(4)(+)/NH(3)). Transport is electrogenic. The protein is Ammonium transporter Amt1 of Haloferax mediterranei (strain ATCC 33500 / DSM 1411 / JCM 8866 / NBRC 14739 / NCIMB 2177 / R-4) (Halobacterium mediterranei).